Consider the following 144-residue polypeptide: Ethylene-responsive transcription factor ERF019 (144 aa).

Positions 13–72 form a DNA-binding region, AP2/ERF; sequence KYKGIRRRKWGKWVSEIRVPGTRDRLWLGSFSTAEGAAVAHDVAFFCLHQPDSLESLNFP.

This sequence belongs to the AP2/ERF transcription factor family. ERF subfamily.

The protein localises to the nucleus. Probably acts as a transcriptional activator. Binds to the GCC-box pathogenesis-related promoter element. May be involved in the regulation of gene expression by stress factors and by components of stress signal transduction pathways. The polypeptide is Ethylene-responsive transcription factor ERF019 (ERF019) (Arabidopsis thaliana (Mouse-ear cress)).